A 340-amino-acid chain; its full sequence is UPF0324 membrane protein OB3406 (340 aa).

Transmembrane regions (helical) follow at residues 12–31, 36–58, 94–116, 126–148, 155–177, 215–237, 257–276, 281–303, and 315–337; these read SFYT…GVLC, LDIM…TIGL, GLHA…YSLA, SILT…APLV, TAVS…TMMY, IAIV…IGIY, IPWF…IGFL, VNLL…GLNV, and VFFA…IYVM.

The protein belongs to the UPF0324 family.

It is found in the cell membrane. The protein is UPF0324 membrane protein OB3406 of Oceanobacillus iheyensis (strain DSM 14371 / CIP 107618 / JCM 11309 / KCTC 3954 / HTE831).